The primary structure comprises 313 residues: Ribosomal RNA small subunit methyltransferase H (313 aa).

Residues 35 to 37 (GGH), D55, F79, D101, and Q108 each bind S-adenosyl-L-methionine.

This sequence belongs to the methyltransferase superfamily. RsmH family.

It is found in the cytoplasm. The catalysed reaction is cytidine(1402) in 16S rRNA + S-adenosyl-L-methionine = N(4)-methylcytidine(1402) in 16S rRNA + S-adenosyl-L-homocysteine + H(+). Specifically methylates the N4 position of cytidine in position 1402 (C1402) of 16S rRNA. In Shigella dysenteriae serotype 1 (strain Sd197), this protein is Ribosomal RNA small subunit methyltransferase H.